The chain runs to 80 residues: Beta-toxin KAaH2 (80 aa).

An N-terminal signal peptide occupies residues Met-1–Gly-22. Residues Val-25 to Ile-80 form the LCN-type CS-alpha/beta domain. Disulfide bonds link Cys-40–Cys-63, Cys-49–Cys-68, and Cys-53–Cys-70.

Belongs to the long (3 C-C) scorpion toxin superfamily. Sodium/Potassium channel inhibitor family. As to expression, expressed by the venom gland.

The protein localises to the secreted. Weakly inhibits the vertebrate potassium channel Kv1.1/KCNA1. The chain is Beta-toxin KAaH2 from Androctonus australis (Sahara scorpion).